A 470-amino-acid polypeptide reads, in one-letter code: Proline--tRNA ligase (470 aa).

The protein belongs to the class-II aminoacyl-tRNA synthetase family. ProS type 3 subfamily. In terms of assembly, homodimer.

Its subcellular location is the cytoplasm. It carries out the reaction tRNA(Pro) + L-proline + ATP = L-prolyl-tRNA(Pro) + AMP + diphosphate. Its function is as follows. Catalyzes the attachment of proline to tRNA(Pro) in a two-step reaction: proline is first activated by ATP to form Pro-AMP and then transferred to the acceptor end of tRNA(Pro). This chain is Proline--tRNA ligase, found in Malacoplasma penetrans (strain HF-2) (Mycoplasma penetrans).